The chain runs to 764 residues: Molybdenum cofactor sulfurase 3 (764 aa).

The residue at position 228 (Lys228) is an N6-(pyridoxal phosphate)lysine. Residue Cys394 is part of the active site. Residues 607 to 762 (LRLLKQSDEE…LYCNSVVEGL (156 aa)) form the MOSC domain.

It belongs to the class-V pyridoxal-phosphate-dependent aminotransferase family. MOCOS subfamily. Pyridoxal 5'-phosphate serves as cofactor.

The catalysed reaction is Mo-molybdopterin + L-cysteine + AH2 = thio-Mo-molybdopterin + L-alanine + A + H2O. Sulfurates the molybdenum cofactor. Sulfation of molybdenum is essential for xanthine dehydrogenase (XDH) and aldehyde oxidase (ADO) enzymes in which molybdenum cofactor is liganded by 1 oxygen and 1 sulfur atom in active form. This Aedes aegypti (Yellowfever mosquito) protein is Molybdenum cofactor sulfurase 3.